We begin with the raw amino-acid sequence, 57 residues long: Neurotoxin Oh9-1 (57 aa).

4 disulfides stabilise this stretch: Cys3/Cys19, Cys12/Cys37, Cys41/Cys49, and Cys50/Cys55.

Belongs to the three-finger toxin family. Short-chain subfamily. As to expression, expressed by the venom gland.

It localises to the secreted. Functionally, this toxin binds and inhibits rat muscle adult alpha-1-beta-1-delta-epsilon/CHRNA1-CHRNB1-CHRND-CHRNE (IC(50)=3.1 uM) and fetal alpha-1-beta-1-gamma-delta/CHRNA1-CHRNB1-CHRNG-CHRND (IC(50)=5.6 uM) nicotinic acetylcholine receptors (nAChR). Shows a very low inhibition on rat neuronal alpha-3-beta-2/CHRNA3-CHRNB2 nAChR (IC(50)=50.2 uM) nAChR. Binds to the acetylcholine-binding pocket and acts as a competitive antagonist. Does not inhibit human glycine receptor (homopentamer composed of alpha-1 subunits, GLRA1), but seems to potentiate it (about 2-fold increased activity). The chain is Neurotoxin Oh9-1 from Ophiophagus hannah (King cobra).